We begin with the raw amino-acid sequence, 118 residues long: Small ribosomal subunit protein uS13 (118 aa).

Residues 94–118 (GLPVRGQRTKTNARTRKGPRKPIKK) form a disordered region.

It belongs to the universal ribosomal protein uS13 family. Part of the 30S ribosomal subunit. Forms a loose heterodimer with protein S19. Forms two bridges to the 50S subunit in the 70S ribosome.

Located at the top of the head of the 30S subunit, it contacts several helices of the 16S rRNA. In the 70S ribosome it contacts the 23S rRNA (bridge B1a) and protein L5 of the 50S subunit (bridge B1b), connecting the 2 subunits; these bridges are implicated in subunit movement. Contacts the tRNAs in the A and P-sites. This chain is Small ribosomal subunit protein uS13, found in Klebsiella pneumoniae (strain 342).